We begin with the raw amino-acid sequence, 585 residues long: 1-deoxy-D-xylulose-5-phosphate synthase (585 aa).

Thiamine diphosphate contacts are provided by residues histidine 80 and 121–123 (GHS). A Mg(2+)-binding site is contributed by aspartate 152. Residues 153 to 154 (GS), asparagine 181, tyrosine 259, and glutamate 334 each bind thiamine diphosphate. Asparagine 181 is a binding site for Mg(2+).

It belongs to the transketolase family. DXPS subfamily. In terms of assembly, homodimer. The cofactor is Mg(2+). Thiamine diphosphate serves as cofactor.

The catalysed reaction is D-glyceraldehyde 3-phosphate + pyruvate + H(+) = 1-deoxy-D-xylulose 5-phosphate + CO2. It functions in the pathway metabolic intermediate biosynthesis; 1-deoxy-D-xylulose 5-phosphate biosynthesis; 1-deoxy-D-xylulose 5-phosphate from D-glyceraldehyde 3-phosphate and pyruvate: step 1/1. Functionally, catalyzes the acyloin condensation reaction between C atoms 2 and 3 of pyruvate and glyceraldehyde 3-phosphate to yield 1-deoxy-D-xylulose-5-phosphate (DXP). The polypeptide is 1-deoxy-D-xylulose-5-phosphate synthase (Buchnera aphidicola subsp. Schizaphis graminum (strain Sg)).